The primary structure comprises 118 residues: Ribosomal silencing factor RsfS (118 aa).

Belongs to the Iojap/RsfS family. Interacts with ribosomal protein uL14 (rplN).

The protein localises to the cytoplasm. Functionally, functions as a ribosomal silencing factor. Interacts with ribosomal protein uL14 (rplN), blocking formation of intersubunit bridge B8. Prevents association of the 30S and 50S ribosomal subunits and the formation of functional ribosomes, thus repressing translation. The chain is Ribosomal silencing factor RsfS from Bacillus subtilis (strain 168).